The chain runs to 144 residues: 3-hydroxyacyl-[acyl-carrier-protein] dehydratase FabZ (144 aa).

The active site involves H48.

This sequence belongs to the thioester dehydratase family. FabZ subfamily.

Its subcellular location is the cytoplasm. It carries out the reaction a (3R)-hydroxyacyl-[ACP] = a (2E)-enoyl-[ACP] + H2O. Involved in unsaturated fatty acids biosynthesis. Catalyzes the dehydration of short chain beta-hydroxyacyl-ACPs and long chain saturated and unsaturated beta-hydroxyacyl-ACPs. The sequence is that of 3-hydroxyacyl-[acyl-carrier-protein] dehydratase FabZ from Bacillus licheniformis (strain ATCC 14580 / DSM 13 / JCM 2505 / CCUG 7422 / NBRC 12200 / NCIMB 9375 / NCTC 10341 / NRRL NRS-1264 / Gibson 46).